We begin with the raw amino-acid sequence, 2055 residues long: Citron rho-interacting kinase (2055 aa).

One can recognise a Protein kinase domain in the interval 97-359 (FEVRSLVGCG…FEGLCCHPFF (263 aa)). Residues 103–111 (VGCGHFAEV) and K126 each bind ATP. D221 (proton acceptor) is an active-site residue. The AGC-kinase C-terminal domain occupies 360–430 (ARTDWNNIRN…SKALGYLGRS (71 aa)). Positions 375–398 (VPTLKSDDDTSNFDEPEKNSWVSS) are disordered. Coiled-coil stretches lie at residues 457-747 (LQDS…AQVS), 773-1238 (IKKD…LEYQ), and 1284-1318 (YNEL…AREE). Residues 1349 to 1376 (PEHQPSAMSLLAPPSSRRKEASTPEEFS) are disordered. Residues 1353–1363 (PSAMSLLAPPS) are compositionally biased toward low complexity. The span at 1365–1376 (RRKEASTPEEFS) shows a compositional bias: basic and acidic residues. Residues 1388–1437 (PHRFNVGLNMRATKCAVCLDTVHFGRQASKCLECQVMCHPKCSTCLPATC) form a Phorbol-ester/DAG-type zinc finger. Residues 1469 to 1589 (SLHLEGWMKV…WVTALESVVA (121 aa)) form the PH domain. The 291-residue stretch at 1617 to 1907 (RLDMNCTLPF…RYLGPAISSG (291 aa)) folds into the CNH domain. Residues 1932–2040 (SGTEQHRVPS…RGRLPAGAVR (109 aa)) are disordered. Polar residues predominate over residues 1939–1948 (VPSTSRSSPN). Positions 1974-2031 (SHPREPSTPHRYRDREGRTELRRDKSPGRPLEREKSPGRMLSTRRERSPGRLFEDSSR) are enriched in basic and acidic residues.

Belongs to the protein kinase superfamily. AGC Ser/Thr protein kinase family. Homodimer. Directly interacts with KIF14 depending on the activation state (stronger interaction with the kinase-dead form). Interacts with TTC3.

It localises to the cytoplasm. The catalysed reaction is L-seryl-[protein] + ATP = O-phospho-L-seryl-[protein] + ADP + H(+). It carries out the reaction L-threonyl-[protein] + ATP = O-phospho-L-threonyl-[protein] + ADP + H(+). In terms of biological role, plays a role in cytokinesis. Required for KIF14 localization to the central spindle and midbody. Putative RHO/RAC effector that binds to the GTP-bound forms of RHO and RAC1. It probably binds p21 with a tighter specificity in vivo. Displays serine/threonine protein kinase activity. Plays an important role in the regulation of cytokinesis and the development of the central nervous system. Phosphorylates MYL9/MLC2. The sequence is that of Citron rho-interacting kinase from Rattus norvegicus (Rat).